The following is a 291-amino-acid chain: ATP synthase gamma chain (291 aa).

The protein belongs to the ATPase gamma chain family. F-type ATPases have 2 components, CF(1) - the catalytic core - and CF(0) - the membrane proton channel. CF(1) has five subunits: alpha(3), beta(3), gamma(1), delta(1), epsilon(1). CF(0) has three main subunits: a, b and c.

The protein localises to the cell inner membrane. Its function is as follows. Produces ATP from ADP in the presence of a proton gradient across the membrane. The gamma chain is believed to be important in regulating ATPase activity and the flow of protons through the CF(0) complex. This Cupriavidus necator (strain ATCC 17699 / DSM 428 / KCTC 22496 / NCIMB 10442 / H16 / Stanier 337) (Ralstonia eutropha) protein is ATP synthase gamma chain.